Reading from the N-terminus, the 370-residue chain is tRNA-specific 2-thiouridylase MnmA (370 aa).

ATP is bound by residues 24-31 and Leu50; that span reads AMSGGVDS. Catalysis depends on Cys119, which acts as the Nucleophile. Cys119 and Cys215 form a disulfide bridge. Gly143 serves as a coordination point for ATP. An interaction with tRNA region spans residues 165–167; sequence KDQ. Cys215 serves as the catalytic Cysteine persulfide intermediate.

This sequence belongs to the MnmA/TRMU family.

The protein localises to the cytoplasm. It carries out the reaction S-sulfanyl-L-cysteinyl-[protein] + uridine(34) in tRNA + AH2 + ATP = 2-thiouridine(34) in tRNA + L-cysteinyl-[protein] + A + AMP + diphosphate + H(+). In terms of biological role, catalyzes the 2-thiolation of uridine at the wobble position (U34) of tRNA, leading to the formation of s(2)U34. The chain is tRNA-specific 2-thiouridylase MnmA from Wolbachia sp. subsp. Drosophila simulans (strain wRi).